The following is a 492-amino-acid chain: E3 ubiquitin-protein ligase ARIH2 (492 aa).

Residues Met-1–Asp-11 are compositionally biased toward polar residues. The disordered stretch occupies residues Met-1–Tyr-37. Over residues Ser-12–Asp-36 the composition is skewed to acidic residues. The segment at Thr-64–Asn-111 is UBA-like. Residues Pro-134–Lys-343 are TRIAD supradomain. Cys-138, Cys-141, Cys-155, His-157, Cys-160, Cys-163, Cys-182, Cys-187, Cys-227, Cys-232, Cys-248, Cys-251, Cys-256, Cys-259, His-264, Cys-269, Cys-296, and Cys-299 together coordinate Zn(2+). Residues Cys-138–Cys-187 form an RING-type 1 zinc finger. An IBR-type zinc finger spans residues Asp-207–Cys-269. The RING-type 2; atypical zinc-finger motif lies at Cys-296 to Cys-325. The active site involves Cys-309. Residues Cys-314, Cys-317, Cys-322, Cys-325, His-332, and Cys-339 each coordinate Zn(2+). Ser-352 carries the phosphoserine modification. The segment at Arg-358–Thr-492 is ariadne domain.

The protein belongs to the RBR family. Ariadne subfamily. Interacts (via RING-type zinc finger 1) with UBE2L3. Interacts (via RING-type zinc finger 2) with UBE2N. Interacts with neddylated CUL5. Interacts (via RING-type 2) with GFI1B. Interacts with GFI1; prevents its ubiquitination and proteasomal degradation. Interacts with DCUN1D1 (via UBA-like domain); promotes DCUN1D1 ubiquitination. Ubiquitinated. Ubiquitination promotes proteasomal degradation.

Its subcellular location is the nucleus. It localises to the cytoplasm. It catalyses the reaction [E2 ubiquitin-conjugating enzyme]-S-ubiquitinyl-L-cysteine + [acceptor protein]-L-lysine = [E2 ubiquitin-conjugating enzyme]-L-cysteine + [acceptor protein]-N(6)-ubiquitinyl-L-lysine.. The protein operates within protein modification; protein ubiquitination. With respect to regulation, autoinhibited by the ariadne domain, which masks the second RING-type zinc finger that contains the active site and inhibits the E3 activity. Inhibition is relieved upon binding to neddylated cullin-RING ubiquitin ligase complexes, which activate the E3 ligase activity of ARIH1. In terms of biological role, E3 ubiquitin-protein ligase, which catalyzes ubiquitination of target proteins together with ubiquitin-conjugating enzyme E2 UBE2L3. Acts as an atypical E3 ubiquitin-protein ligase by working together with cullin-5-RING ubiquitin ligase complex (ECS complex, also named CRL5 complex) and initiating ubiquitination of ECS substrates: associates with ECS complex and specifically mediates addition of the first ubiquitin on ECS targets. The initial ubiquitin is then elongated. E3 ubiquitin-protein ligase activity is activated upon binding to neddylated form of the ECS complex. Mediates 'Lys-6', 'Lys-48'- and 'Lys-63'-linked polyubiquitination. May play a role in myelopoiesis. In Mus musculus (Mouse), this protein is E3 ubiquitin-protein ligase ARIH2 (Arih2).